We begin with the raw amino-acid sequence, 625 residues long: DNA mismatch repair protein MutL (625 aa).

It belongs to the DNA mismatch repair MutL/HexB family.

Its function is as follows. This protein is involved in the repair of mismatches in DNA. It is required for dam-dependent methyl-directed DNA mismatch repair. May act as a 'molecular matchmaker', a protein that promotes the formation of a stable complex between two or more DNA-binding proteins in an ATP-dependent manner without itself being part of a final effector complex. The sequence is that of DNA mismatch repair protein MutL from Xanthomonas axonopodis pv. citri (strain 306).